Reading from the N-terminus, the 523-residue chain is UDP-glucuronosyltransferase 3A1 (523 aa).

Positions 1 to 22 (MAAHRSWLLVSFFLLEVLLLEA) are cleaved as a signal peptide. At 23-487 (AKILTISTLS…QPWHEQYMLD (465 aa)) the chain is on the extracellular side. Residue Asn70 is glycosylated (N-linked (GlcNAc...) asparagine). Residues 488 to 508 (VFLFLLGLTLGTLWLSVKVLV) traverse the membrane as a helical segment. Over 509 to 523 (AVTRYLSISRKVKQA) the chain is Cytoplasmic.

It belongs to the UDP-glycosyltransferase family. In terms of tissue distribution, highly expressed in kidney, while it is expressed at low levels in liver. Not detected in other tissues examined.

The protein resides in the membrane. It carries out the reaction glucuronate acceptor + UDP-alpha-D-glucuronate = acceptor beta-D-glucuronoside + UDP + H(+). UDP-glucuronosyltransferases catalyze phase II biotransformation reactions in which lipophilic substrates are conjugated with glucuronic acid to increase water solubility and enhance excretion. They are of major importance in the conjugation and subsequent elimination of potentially toxic xenobiotics and endogenous compounds. This Mus musculus (Mouse) protein is UDP-glucuronosyltransferase 3A1 (Ugt3a1).